The chain runs to 236 residues: Protein Thf1 (236 aa).

A coiled-coil region spans residues 180 to 220 (PVEKMQKDLEQYRSNLEKMTQARKTLEDIVAAERKRRQQNA). The interval 206–236 (EDIVAAERKRRQQNAAPDRSPESASATEAPN) is disordered. The segment covering 227–236 (ESASATEAPN) has biased composition (polar residues).

It belongs to the THF1 family.

Its function is as follows. May be involved in photosynthetic membrane biogenesis. The sequence is that of Protein Thf1 from Cyanothece sp. (strain PCC 7425 / ATCC 29141).